A 571-amino-acid polypeptide reads, in one-letter code: DM7 family protein CG15332 (571 aa).

Residues 440–472 form a disordered region; the sequence is TRDDGINTADYQSQFPELEPEPEPEPEDEGEDV. The span at 457–471 shows a compositional bias: acidic residues; sequence LEPEPEPEPEDEGED.

The protein belongs to the DM7 family.

This is DM7 family protein CG15332 from Drosophila melanogaster (Fruit fly).